A 250-amino-acid polypeptide reads, in one-letter code: tRNA pseudouridine synthase A (250 aa).

The Nucleophile role is filled by Asp53. Tyr111 is a binding site for substrate.

This sequence belongs to the tRNA pseudouridine synthase TruA family. Homodimer.

It carries out the reaction uridine(38/39/40) in tRNA = pseudouridine(38/39/40) in tRNA. In terms of biological role, formation of pseudouridine at positions 38, 39 and 40 in the anticodon stem and loop of transfer RNAs. The chain is tRNA pseudouridine synthase A from Streptococcus uberis (strain ATCC BAA-854 / 0140J).